The following is a 309-amino-acid chain: Acetylglutamate kinase (309 aa).

Substrate-binding positions include 82–83, Arg-104, and Asn-206; that span reads GG.

It belongs to the acetylglutamate kinase family. ArgB subfamily.

The protein resides in the cytoplasm. The catalysed reaction is N-acetyl-L-glutamate + ATP = N-acetyl-L-glutamyl 5-phosphate + ADP. The protein operates within amino-acid biosynthesis; L-arginine biosynthesis; N(2)-acetyl-L-ornithine from L-glutamate: step 2/4. In terms of biological role, catalyzes the ATP-dependent phosphorylation of N-acetyl-L-glutamate. The polypeptide is Acetylglutamate kinase (Cupriavidus pinatubonensis (strain JMP 134 / LMG 1197) (Cupriavidus necator (strain JMP 134))).